A 197-amino-acid chain; its full sequence is Putative WUSCHEL-related homeobox 10 (197 aa).

The homeobox; WUS-type DNA-binding region spans 75–139; sequence STRPRWTPTT…NRRARSKRKQ (65 aa). Residues 132–168 are disordered; that stretch reads RARSKRKQPPTTTITSSQADDAAVTTTEERGRCGDDS. Polar residues predominate over residues 140–150; it reads PPTTTITSSQA.

This sequence belongs to the WUS homeobox family.

Its subcellular location is the nucleus. In terms of biological role, potential transcription factor that plays a central role during developmental processes. The sequence is that of Putative WUSCHEL-related homeobox 10 (WOX10) from Arabidopsis thaliana (Mouse-ear cress).